The following is a 329-amino-acid chain: Malate dehydrogenase (329 aa).

An NAD(+)-binding site is contributed by glycine 12–glycine 18. Substrate is bound by residues arginine 95 and arginine 101. NAD(+)-binding positions include asparagine 108, glutamine 115, and valine 132 to asparagine 134. Residues asparagine 134 and arginine 165 each contribute to the substrate site. Residue histidine 190 is the Proton acceptor of the active site.

This sequence belongs to the LDH/MDH superfamily. MDH type 2 family. As to quaternary structure, homodimer.

It carries out the reaction (S)-malate + NAD(+) = oxaloacetate + NADH + H(+). With respect to regulation, substrate inhibition is observed at high concentrations of oxaloacetate. Its function is as follows. Catalyzes the reversible oxidation of malate to oxaloacetate. Catalyzes the reduction of oxaloacetate more efficiently than the oxidation of malate. The polypeptide is Malate dehydrogenase (Syntrophobacter fumaroxidans (strain DSM 10017 / MPOB)).